A 155-amino-acid polypeptide reads, in one-letter code: Small ribosomal subunit protein uS7c (155 aa).

This sequence belongs to the universal ribosomal protein uS7 family. In terms of assembly, part of the 30S ribosomal subunit.

The protein localises to the plastid. It is found in the chloroplast. In terms of biological role, one of the primary rRNA binding proteins, it binds directly to 16S rRNA where it nucleates assembly of the head domain of the 30S subunit. In Spathiphyllum wallisii (Peace lily), this protein is Small ribosomal subunit protein uS7c (rps7).